Consider the following 722-residue polypeptide: Glycine--tRNA ligase beta subunit (722 aa).

Belongs to the class-II aminoacyl-tRNA synthetase family. Tetramer of two alpha and two beta subunits.

The protein resides in the cytoplasm. It catalyses the reaction tRNA(Gly) + glycine + ATP = glycyl-tRNA(Gly) + AMP + diphosphate. The polypeptide is Glycine--tRNA ligase beta subunit (Xylella fastidiosa (strain Temecula1 / ATCC 700964)).